Consider the following 956-residue polypeptide: Translation initiation factor IF-2 (956 aa).

Positions 50-351 (FPADSGGAAN…APSIGGVQVP (302 aa)) are disordered. The segment covering 64 to 95 (APKPARAPKPAPKAAPAPPVEEAPAEPAPPAA) has biased composition (pro residues). 2 stretches are compositionally biased toward low complexity: residues 96–107 (PEVVAAPEAPVA) and 121–136 (PEAPAAERPAAQARPA). A compositionally biased stretch (basic and acidic residues) spans 146–155 (AAEKPADTRT). 2 stretches are compositionally biased toward gly residues: residues 171 to 192 (RPGGQGGPRPGGPRPSGGGGPR) and 206 to 234 (RPGGSGAAGPRPGGTGAAGPRPGGSGQGG). A compositionally biased stretch (low complexity) spans 235-254 (SRPSPGMMPGRSAVGRPGAP). A compositionally biased stretch (gly residues) spans 255 to 320 (ARGGSGGPGG…GTQGAFGRAG (66 aa)). Residues 324-333 (VRARKSRRAK) show a composition bias toward basic residues. In terms of domain architecture, tr-type G spans 448 to 619 (ARPPVVTVMG…AVLLTADAAL (172 aa)). The G1 stretch occupies residues 457–464 (GHVDHGKT). 457-464 (GHVDHGKT) serves as a coordination point for GTP. Residues 482–486 (GITQH) are G2. The tract at residues 507–510 (DTPG) is G3. GTP-binding positions include 507 to 511 (DTPGH) and 561 to 564 (NKVD). The interval 561 to 564 (NKVD) is G4. The segment at 597–599 (SAK) is G5.

Belongs to the TRAFAC class translation factor GTPase superfamily. Classic translation factor GTPase family. IF-2 subfamily.

The protein localises to the cytoplasm. In terms of biological role, one of the essential components for the initiation of protein synthesis. Protects formylmethionyl-tRNA from spontaneous hydrolysis and promotes its binding to the 30S ribosomal subunits. Also involved in the hydrolysis of GTP during the formation of the 70S ribosomal complex. The polypeptide is Translation initiation factor IF-2 (Beutenbergia cavernae (strain ATCC BAA-8 / DSM 12333 / CCUG 43141 / JCM 11478 / NBRC 16432 / NCIMB 13614 / HKI 0122)).